Consider the following 608-residue polypeptide: FAD-binding monooxygenase ktnD (608 aa).

Residue N4 is glycosylated (N-linked (GlcNAc...) asparagine). A helical transmembrane segment spans residues 17–37 (ATVVIIGAGVSGMCMAIDLLH). Residues 56-59 (TWAN), 68-69 (DV), and Y74 contribute to the FAD site. 66-68 (ASD) contributes to the NADP(+) binding site. An N-linked (GlcNAc...) asparagine glycan is attached at N114. Residues 201–207 (NGASAIQ) and 224–225 (RS) each bind NADP(+). N325 carries an N-linked (GlcNAc...) asparagine glycan. The chain crosses the membrane as a helical span at residues 535–555 (ALVSNVTLFLGVALAAGGVYW).

This sequence belongs to the FAD-binding monooxygenase family. Requires FAD as cofactor.

The protein resides in the membrane. Functionally, non-reducing polyketide synthase; part of the gene cluster that mediates the biosynthesis of the bicoumarin kotanin. The non-reducing polyketide synthase ktnS first catalyzes the formation of the pentaketidic 4,7-dihydroxy-5-methylcoumarin from acetyl coenzyme A and 4 malonyl coenzyme A molecules. Further O-methylation by ktnB leads to the formation of 7-demethylsiderin. Then, an oxidative phenol coupling catalyzed by the cytochrome P450 monooxygenase ktnC forms the 8,8'-dimer P-orlandin via dimerization the monomeric precursor, 7-demethylsiderin. P-orlandin is subsequently O-methylated in a stepwise fashion to demethylkotanin and kotanin. The function of ktnD within the pathway has not been determined yet. The sequence is that of FAD-binding monooxygenase ktnD from Aspergillus niger (strain ATCC MYA-4892 / CBS 513.88 / FGSC A1513).